The sequence spans 238 residues: Ditrans,polycis-undecaprenyl-diphosphate synthase ((2E,6E)-farnesyl-diphosphate specific) (238 aa).

Asp-14 is an active-site residue. A Mg(2+)-binding site is contributed by Asp-14. Substrate-binding positions include 15–18, Trp-19, Arg-27, His-31, and 59–61; these read GNGR and SSE. Catalysis depends on Asn-62, which acts as the Proton acceptor. Residues Trp-63, Arg-65, Arg-182, and 188-190 each bind substrate; that span reads RIS. Glu-201 lines the Mg(2+) pocket.

It belongs to the UPP synthase family. Homodimer. Requires Mg(2+) as cofactor.

The enzyme catalyses 8 isopentenyl diphosphate + (2E,6E)-farnesyl diphosphate = di-trans,octa-cis-undecaprenyl diphosphate + 8 diphosphate. Functionally, catalyzes the sequential condensation of isopentenyl diphosphate (IPP) with (2E,6E)-farnesyl diphosphate (E,E-FPP) to yield (2Z,6Z,10Z,14Z,18Z,22Z,26Z,30Z,34E,38E)-undecaprenyl diphosphate (di-trans,octa-cis-UPP). UPP is the precursor of glycosyl carrier lipid in the biosynthesis of bacterial cell wall polysaccharide components such as peptidoglycan and lipopolysaccharide. In Legionella pneumophila subsp. pneumophila (strain Philadelphia 1 / ATCC 33152 / DSM 7513), this protein is Ditrans,polycis-undecaprenyl-diphosphate synthase ((2E,6E)-farnesyl-diphosphate specific).